The primary structure comprises 116 residues: Large ribosomal subunit protein bL17 (116 aa).

Belongs to the bacterial ribosomal protein bL17 family. Part of the 50S ribosomal subunit. Contacts protein L32.

This Cyanothece sp. (strain PCC 7425 / ATCC 29141) protein is Large ribosomal subunit protein bL17.